We begin with the raw amino-acid sequence, 213 residues long: Ras-related protein Rab-4B (213 aa).

N-acetylalanine is present on A2. GDP contacts are provided by G18, T19, G20, K21, S22, and C23. Residues G18, T19, G20, K21, S22, C23, S37, H39, and T40 each contribute to the GTP site. Residue S22 participates in Mg(2+) binding. Residues 39–44 (HTIGVE) carry the Switch 1 motif. Positions 40 and 63 each coordinate Mg(2+). Residues 65 to 74 (AGQERFRSVT) carry the Switch 2 motif. G66 provides a ligand contact to GTP. Q67 is subject to 5-glutamyl serotonin. The GDP site is built by N121, K122, D124, A152, and L153. GTP-binding residues include N121, K122, D124, A152, and L153. Phosphoserine is present on residues S185 and S193. Residues C211 and C213 are each lipidated (S-geranylgeranyl cysteine). C213 carries the cysteine methyl ester modification.

This sequence belongs to the small GTPase superfamily. Rab family. In terms of assembly, interacts (GTP-bound form) with RUFY1; the interaction allows endosomal tethering and fusion. It depends on Mg(2+) as a cofactor. Post-translationally, serotonylation of Gln-67 by TGM2 during activation and aggregation of platelets leads to constitutive activation of GTPase activity.

It is found in the cell membrane. The protein resides in the early endosome membrane. The catalysed reaction is GTP + H2O = GDP + phosphate + H(+). Regulated by guanine nucleotide exchange factors (GEFs) which promote the exchange of bound GDP for free GTP. Regulated by GTPase activating proteins (GAPs) which increase the GTP hydrolysis activity. Inhibited by GDP dissociation inhibitors (GDIs). The small GTPases Rab are key regulators of intracellular membrane trafficking, from the formation of transport vesicles to their fusion with membranes. Rabs cycle between an inactive GDP-bound form and an active GTP-bound form that is able to recruit to membranes different set of downstream effectors directly responsible for vesicle formation, movement, tethering and fusion. RAB4B mediates endosomal tethering and fusion through the interaction with RUFY1 and RAB14. Acts as a regulator of platelet alpha-granule release during activation and aggregation of platelets. The chain is Ras-related protein Rab-4B from Homo sapiens (Human).